The primary structure comprises 484 residues: ATP-dependent RNA helicase DDX25 (484 aa).

Threonine 49 carries the post-translational modification Phosphothreonine. The short motif at 62–75 (LAANSLLNKLIRQS) is the Nuclear export signal element. A Q motif motif is present at residues 98-126 (KTFEELRLKEELLKGIYAMGFNRPSKIQE). The short motif at 101-115 (EELRLKEELLKGIYA) is the Nuclear localization signal element. The region spanning 131–301 (MMLAHPPQNL…ERIIPDPNVI (171 aa)) is the Helicase ATP-binding domain. 144 to 151 (SQSGTGKT) serves as a coordination point for ATP. The short motif at 248–251 (DEAD) is the DEAD box element. The Helicase C-terminal domain maps to 312 to 479 (NIRQYYVLCE…QLDPEDMDEI (168 aa)).

This sequence belongs to the DEAD box helicase family. Post-translationally, phosphorylated on threonine residues. The phosphorylated form is found in the cytoplasm but not in the nucleus. As to expression, isoform 1 is expressed in germ cells. Isoform 2 is expressed in Leydig cells and in round spermatids of adult testis upon gonadotropin stimulation.

The protein resides in the cytoplasm. Its subcellular location is the nucleus. It catalyses the reaction ATP + H2O = ADP + phosphate + H(+). Functionally, ATP-dependent RNA helicase. Required for mRNA export and translation regulation during spermatid development. The chain is ATP-dependent RNA helicase DDX25 (Ddx25) from Mus musculus (Mouse).